Consider the following 130-residue polypeptide: MASVKLASLIVLFATLGMFLTKNVGAASCNGVCSPFEMPPCGTSACRCIPVGLVVGYCRNPSGVFLRTNDEHPNLCESDADCRKKGSGNFCGHYPNPDIEYGWCFASKSEAEDFFSKITPKDLLKSVSTA.

The N-terminal stretch at 1–26 is a signal peptide; sequence MASVKLASLIVLFATLGMFLTKNVGA. 3 disulfide bridges follow: C29–C46, C33–C48, and C41–C58. 2 consecutive propeptides follow at residues 64–69 and 123–130; these read VFLRTN and LLKSVSTA.

The C-terminal glycine may be removed from PA1b. Major component of both the cotyledons and embryonic axes of mature seeds.

In terms of biological role, PA1b binds to basic 7S globulin (BG) and stimulates its phosphorylation activity. Involved in the signal transduction system to regulate the growth and differentiation as a hormone peptide. Toxic to various insects through binding to a high affinity binding site in the insect gut. This chain is Albumin-1 A, found in Pisum sativum (Garden pea).